A 161-amino-acid chain; its full sequence is E3 ubiquitin ligase complex SCF subunit sconC (161 aa).

An interaction with the F-box domain of F-box proteins region spans residues 102–161 (ILAANYLDIKPLLDIGCKTVANMIKGKSPEEIRKTFNIQNDFTPEEEDQIRRENEWAEDR).

The protein belongs to the SKP1 family. In terms of assembly, component of the SCF (SKP1-CUL1-F-box protein) E3 ubiquitin ligase complexes.

The protein operates within protein modification; protein ubiquitination. Functionally, essential component of the SCF (SKP1-CUL1-F-box protein) E3 ubiquitin ligase complexes, which mediate the ubiquitination and subsequent proteasomal degradation of target proteins. Controls sulfur metabolite repression, probably by mediating the inactivation or degradation of the metR transcription factor. This chain is E3 ubiquitin ligase complex SCF subunit sconC (sconC), found in Emericella nidulans (strain FGSC A4 / ATCC 38163 / CBS 112.46 / NRRL 194 / M139) (Aspergillus nidulans).